The following is a 138-amino-acid chain: FUN14 domain-containing protein fndc-1 (138 aa).

Helical transmembrane passes span 37–56 (PMVQ…YFVT) and 61–78 (LVAA…FAIH). Asn85 and Asn111 each carry an N-linked (GlcNAc...) asparagine glycan.

The protein belongs to the FUN14 family. In terms of tissue distribution, broadly expressed in somatic tissues. Expressed in the hermaphrodite spermatheca and male gonad. Expressed in spermatids, but not expressed in oocytes.

The protein resides in the mitochondrion outer membrane. Its function is as follows. Mitophagy receptor which plays a role in paternal mitochondria degradation in embryos after the two-cell stage. The protein is FUN14 domain-containing protein fndc-1 of Caenorhabditis elegans.